The following is an 85-amino-acid chain: Sec-independent protein translocase protein TatA (85 aa).

The chain crosses the membrane as a helical span at residues 1 to 21; sequence MGGISIWQLLIIALIVVLLFG. The disordered stretch occupies residues 43-85; that stretch reads MSSEEDKKALEDAEAAKPVQTAQTAQPTQQATEKKPESNKEQA. The span at 46-57 shows a compositional bias: basic and acidic residues; the sequence is EEDKKALEDAEA. Positions 58-73 are enriched in low complexity; it reads AKPVQTAQTAQPTQQA. Basic and acidic residues predominate over residues 74–85; the sequence is TEKKPESNKEQA.

It belongs to the TatA/E family. As to quaternary structure, the Tat system comprises two distinct complexes: a TatABC complex, containing multiple copies of TatA, TatB and TatC subunits, and a separate TatA complex, containing only TatA subunits. Substrates initially bind to the TatABC complex, which probably triggers association of the separate TatA complex to form the active translocon.

Its subcellular location is the cell inner membrane. In terms of biological role, part of the twin-arginine translocation (Tat) system that transports large folded proteins containing a characteristic twin-arginine motif in their signal peptide across membranes. TatA could form the protein-conducting channel of the Tat system. The sequence is that of Sec-independent protein translocase protein TatA from Shewanella sp. (strain MR-4).